The chain runs to 331 residues: MLKHTAKALVCALSLTVAGIVQAADPIVIKFSHVVAEHTPKGQGALLFKKLVEERLPGKVKVEVYPNSSLFGDGKEMEALLLGDVQIIAPSLAKFEQYTKKLQIFDLPFLFDNIQAVDRFQQSPQGKELLTSMQDKGITGLGYWHNGMKQLSANKPLREPKDARGLKFRVQASKVLEEQFKAVRANPRKMSFAEVYQGLQTGVVNGTENPWSNIYSQKMHEVQKYITESDHGVLDYMVITNTKFWNGLPEDVRGVLAKTMDEVTVEVNKQAEALNQGDKQRIVEAKTSEIIELTPEQRAEWRKAMQPVWKKFEGEIGADLIKAAEAANQAQ.

An N-terminal signal peptide occupies residues 1 to 23 (MLKHTAKALVCALSLTVAGIVQA).

Belongs to the bacterial solute-binding protein 7 family. As to quaternary structure, the complex comprises the extracytoplasmic solute receptor protein DctP, and the two transmembrane proteins DctQ and DctM.

It localises to the periplasm. Functionally, part of the tripartite ATP-independent periplasmic (TRAP) transport system DctPQM involved in C4-dicarboxylates uptake. The chain is C4-dicarboxylate-binding periplasmic protein DctP from Pseudomonas aeruginosa (strain ATCC 15692 / DSM 22644 / CIP 104116 / JCM 14847 / LMG 12228 / 1C / PRS 101 / PAO1).